A 330-amino-acid polypeptide reads, in one-letter code: Phosphate acyltransferase (330 aa).

The protein belongs to the PlsX family. As to quaternary structure, homodimer. Probably interacts with PlsY.

The protein localises to the cytoplasm. It carries out the reaction a fatty acyl-[ACP] + phosphate = an acyl phosphate + holo-[ACP]. The protein operates within lipid metabolism; phospholipid metabolism. In terms of biological role, catalyzes the reversible formation of acyl-phosphate (acyl-PO(4)) from acyl-[acyl-carrier-protein] (acyl-ACP). This enzyme utilizes acyl-ACP as fatty acyl donor, but not acyl-CoA. This is Phosphate acyltransferase from Bacillus mycoides (strain KBAB4) (Bacillus weihenstephanensis).